The chain runs to 295 residues: Elongation factor Ts (295 aa).

The segment at 79-82 is involved in Mg(2+) ion dislocation from EF-Tu; it reads TDFV.

This sequence belongs to the EF-Ts family.

The protein resides in the cytoplasm. Its function is as follows. Associates with the EF-Tu.GDP complex and induces the exchange of GDP to GTP. It remains bound to the aminoacyl-tRNA.EF-Tu.GTP complex up to the GTP hydrolysis stage on the ribosome. This Bacillus mycoides (strain KBAB4) (Bacillus weihenstephanensis) protein is Elongation factor Ts.